Here is a 292-residue protein sequence, read N- to C-terminus: 4-hydroxybenzoate octaprenyltransferase (292 aa).

The next 8 helical transmembrane spans lie at 23 to 43 (PIGI…AGEG), 47 to 67 (PGVA…GCVI), 98 to 118 (LILF…MNWL), 141 to 161 (HLPQ…TFAA), 164 to 184 (GSIP…ALIY), 211 to 231 (YDRE…AGIG), 233 to 253 (YLGL…FSVY), and 270 to 290 (FLNN…DYLW).

Belongs to the UbiA prenyltransferase family. Mg(2+) is required as a cofactor.

The protein localises to the cell inner membrane. It carries out the reaction all-trans-octaprenyl diphosphate + 4-hydroxybenzoate = 4-hydroxy-3-(all-trans-octaprenyl)benzoate + diphosphate. It functions in the pathway cofactor biosynthesis; ubiquinone biosynthesis. Functionally, catalyzes the prenylation of para-hydroxybenzoate (PHB) with an all-trans polyprenyl group. Mediates the second step in the final reaction sequence of ubiquinone-8 (UQ-8) biosynthesis, which is the condensation of the polyisoprenoid side chain with PHB, generating the first membrane-bound Q intermediate 3-octaprenyl-4-hydroxybenzoate. The polypeptide is 4-hydroxybenzoate octaprenyltransferase (Methylococcus capsulatus (strain ATCC 33009 / NCIMB 11132 / Bath)).